The primary structure comprises 255 residues: Proteasome subunit alpha type-3 (255 aa).

Ser2 carries the post-translational modification N-acetylserine. N6-acetyllysine is present on residues Lys57, Lys206, and Lys230. Residues Ser243 and Ser250 each carry the phosphoserine modification.

Belongs to the peptidase T1A family. The 26S proteasome consists of a 20S proteasome core and two 19S regulatory subunits. The 20S proteasome core is a barrel-shaped complex made of 28 subunits that are arranged in four stacked rings. The two outer rings are each formed by seven alpha subunits, and the two inner rings are formed by seven beta subunits. The proteolytic activity is exerted by three beta-subunits PSMB5, PSMB6 and PSMB7. Interacts with AURKB. Interacts with CDKN1A. Interacts with MDM2 and RB1. Interacts with the C-terminus of TBXA2R isoform 2. Interacts with DNAJB2. Detected in liver (at protein level).

It is found in the cytoplasm. Its subcellular location is the nucleus. In terms of biological role, component of the 20S core proteasome complex involved in the proteolytic degradation of most intracellular proteins. This complex plays numerous essential roles within the cell by associating with different regulatory particles. Associated with two 19S regulatory particles, forms the 26S proteasome and thus participates in the ATP-dependent degradation of ubiquitinated proteins. The 26S proteasome plays a key role in the maintenance of protein homeostasis by removing misfolded or damaged proteins that could impair cellular functions, and by removing proteins whose functions are no longer required. Associated with the PA200 or PA28, the 20S proteasome mediates ubiquitin-independent protein degradation. This type of proteolysis is required in several pathways including spermatogenesis (20S-PA200 complex) or generation of a subset of MHC class I-presented antigenic peptides (20S-PA28 complex). Binds to the C-terminus of CDKN1A and thereby mediates its degradation. Negatively regulates the membrane trafficking of the cell-surface thromboxane A2 receptor (TBXA2R) isoform 2. In Mus musculus (Mouse), this protein is Proteasome subunit alpha type-3 (Psma3).